We begin with the raw amino-acid sequence, 343 residues long: Ribosomal RNA small subunit methyltransferase, chloroplastic (343 aa).

A chloroplast-targeting transit peptide spans Met-1–Ser-48. Residues His-78, Met-80, Gly-105, Glu-126, Asp-151, and Asn-183 each coordinate S-adenosyl-L-methionine.

This sequence belongs to the class I-like SAM-binding methyltransferase superfamily. rRNA adenine N(6)-methyltransferase family.

It is found in the plastid. Its subcellular location is the chloroplast. Required for methylation of the 3' adenosines in the small subunit of plastid rRNA. Essential for chloroplast biogenesis at low temperatures. This chain is Ribosomal RNA small subunit methyltransferase, chloroplastic, found in Arabidopsis thaliana (Mouse-ear cress).